The primary structure comprises 645 residues: Homeobox protein B-H2 (645 aa).

Disordered stretches follow at residues 1-50 (MTTM…TTAT), 86-134 (SSGG…QAAL), 149-176 (REREREREREHYRERHSPPGNNPYAHHP), 240-259 (SHLSHQQHHPHLHHPMHDER), 265-385 (MLQQ…KART), and 553-645 (GAQQ…ALEV). The segment covering 18 to 29 (SAPSATAHHPAA) has biased composition (low complexity). Residues 106–121 (QHHHHHQQQQQHHHHQ) show a composition bias toward basic residues. Residues 122-134 (QQQQQQQHQQAAL) show a composition bias toward low complexity. The span at 149–165 (REREREREREHYRERHS) shows a compositional bias: basic and acidic residues. The segment covering 244 to 253 (HQQHHPHLHH) has biased composition (basic residues). Positions 275-316 (NNNNNNNNSSSASNNNNNNNNSASANSNIISGNSSSSNNNNG) are enriched in low complexity. The segment covering 317–328 (SGNGNMLLGGPG) has biased composition (gly residues). A compositionally biased stretch (polar residues) spans 329–339 (SSISGDQASTI). Positions 362-377 (SSANGDSSSHLSLSLS) are enriched in low complexity. Residues 380–439 (QRKARTAFTDHQLQTLEKSFERQKYLSVQDRMELANKLELSDCQVKTWYQNRRTKWKRQT) constitute a DNA-binding region (homeobox). A compositionally biased stretch (low complexity) spans 553–574 (GAQQQQQQPPAASRSPATSQSA). Residues 583–592 (TSSSSRQRLI) show a composition bias toward polar residues. Residue Thr593 is modified to Phosphothreonine. Pro residues predominate over residues 594–603 (PSPPLNPGSP). Phosphoserine occurs at positions 595 and 602. A compositionally biased stretch (basic and acidic residues) spans 618–632 (DEERDIERERERERE). Positions 633 to 645 (RDEDDEEELALEV) are enriched in acidic residues.

Belongs to the Antp homeobox family. As to expression, B-H1 and B-H2 are abundant in the eye-antenna imaginal disk. Expressed in R1 and R6 cells throughout larval stage until 30 hours after puparium formation, at which time expression is seen in the anterior and posterior primary pigment cells. Coexpressed in embryonic glial cells, neurons of the CNS and PNS, most latitudinal anterior cells of the developing notum and the central circular region of the leg and antennal imaginal disk throughout larval development.

It is found in the nucleus. Functionally, B-H1 and B-H2 are regulated by members of the wg signaling pathway; wg and dpp. B-H1 and B-H2 are coexpressed and functionally required in R1 and R6 receptor cells and primary pigment cells for normal eye development. Coexpression is also required for the fate determination of external sensory organs, formation of notal microchaetae, formation of presutural macrochaetae, antennal development and for distal leg morphogenesis; segmentation and specification of tarsal segments 3-5. In Drosophila melanogaster (Fruit fly), this protein is Homeobox protein B-H2 (B-H2).